Consider the following 1317-residue polypeptide: DNA-directed RNA polymerase subunit beta' (1317 aa).

Zn(2+)-binding residues include Cys-60, Cys-62, Cys-75, and Cys-78. Mg(2+)-binding residues include Asp-535, Asp-537, and Asp-539. Residues Cys-890, Cys-967, Cys-974, and Cys-977 each contribute to the Zn(2+) site.

Belongs to the RNA polymerase beta' chain family. As to quaternary structure, the RNAP catalytic core consists of 2 alpha, 1 beta, 1 beta' and 1 omega subunit. When a sigma factor is associated with the core the holoenzyme is formed, which can initiate transcription. Requires Mg(2+) as cofactor. Zn(2+) is required as a cofactor.

It catalyses the reaction RNA(n) + a ribonucleoside 5'-triphosphate = RNA(n+1) + diphosphate. Functionally, DNA-dependent RNA polymerase catalyzes the transcription of DNA into RNA using the four ribonucleoside triphosphates as substrates. The protein is DNA-directed RNA polymerase subunit beta' of Nocardia farcinica (strain IFM 10152).